We begin with the raw amino-acid sequence, 465 residues long: Histidine--tRNA ligase (465 aa).

Belongs to the class-II aminoacyl-tRNA synthetase family. Homodimer.

It localises to the cytoplasm. The catalysed reaction is tRNA(His) + L-histidine + ATP = L-histidyl-tRNA(His) + AMP + diphosphate + H(+). This chain is Histidine--tRNA ligase (hisS), found in Pelagibacter ubique (strain HTCC1062).